A 204-amino-acid chain; its full sequence is Large ribosomal subunit protein uL3c (204 aa).

A disordered region spans residues 126 to 155; the sequence is HNFTRGPMTHGSKNHREPGSIGQGSTPAKV.

This sequence belongs to the universal ribosomal protein uL3 family. In terms of assembly, part of the 50S ribosomal subunit.

It localises to the plastid. It is found in the chloroplast. One of the primary rRNA binding proteins, it binds directly near the 3'-end of the 23S rRNA, where it nucleates assembly of the 50S subunit. In Guillardia theta (Cryptophyte), this protein is Large ribosomal subunit protein uL3c (rpl3).